The sequence spans 433 residues: 3-deoxy-D-manno-octulosonic acid transferase (433 aa).

The chain crosses the membrane as a helical; Signal-anchor span at residues 11-31; sequence TFLYDCFLIFAFMVGLPRILY. Glu70 serves as the catalytic Proton acceptor. CMP-binding positions include 277–278, 317–319, and 344–347; these read PR, IGW, and NLLE.

It belongs to the glycosyltransferase group 1 family. Glycosyltransferase 30 subfamily.

It localises to the cell inner membrane. The catalysed reaction is lipid IVA (E. coli) + CMP-3-deoxy-beta-D-manno-octulosonate = alpha-Kdo-(2-&gt;6)-lipid IVA (E. coli) + CMP + H(+). It carries out the reaction alpha-Kdo-(2-&gt;6)-lipid IVA (E. coli) + CMP-3-deoxy-beta-D-manno-octulosonate = alpha-Kdo-(2-&gt;4)-alpha-Kdo-(2-&gt;6)-lipid IVA (E. coli) + CMP + H(+). It catalyses the reaction alpha-Kdo-(2-&gt;4)-alpha-Kdo-(2-&gt;6)-lipid IVA (E. coli) + CMP-3-deoxy-beta-D-manno-octulosonate = alpha-Kdo-(2-&gt;8)-alpha-Kdo-(2-&gt;4)-alpha-Kdo-(2-&gt;6)-lipid IVA (E. coli) + CMP + H(+). The enzyme catalyses alpha-Kdo-(2-&gt;8)-alpha-Kdo-(2-&gt;4)-alpha-Kdo-(2-&gt;6)-lipid IVA (E. coli) + CMP-3-deoxy-beta-D-manno-octulosonate = alpha-Kdo-(2-&gt;8)-[alpha-Kdo-(2-&gt;4)]-alpha-Kdo-(2-&gt;4)-alpha-Kdo-(2-&gt;6)-lipid IVA + CMP + H(+). Its pathway is bacterial outer membrane biogenesis; LPS core biosynthesis. Functionally, involved in lipopolysaccharide (LPS) biosynthesis. Catalyzes the transfer of predominantly four 3-deoxy-D-manno-octulosonate (Kdo) residues from CMP-Kdo to lipid IV(A), the tetraacyldisaccharide-1,4'-bisphosphate precursor of lipid A. Thus generates the genus-specific LPS epitope of Chlamydia, composed of the trisaccharide alpha-Kdo-(2-&gt;8)-alpha-Kdo-(2-&gt;4)-alpha-Kdo. The polypeptide is 3-deoxy-D-manno-octulosonic acid transferase (waaA) (Chlamydophila psittaci (strain ATCC VR-125 / 6BC) (Chlamydia psittaci)).